We begin with the raw amino-acid sequence, 74 residues long: Delta-actitoxin-Amc3a (74 aa).

An N-terminal signal peptide occupies residues 1-19 (MNRLIILVVAAVFLGMASA). The propeptide occupies 20 to 24 (EEDVL). A Hydroxyproline modification is found at Pro-29. 3 cysteine pairs are disulfide-bonded: Cys-30-Cys-70, Cys-32-Cys-60, and Cys-53-Cys-71. Position 73 is a glutamine amide (Gln-73).

It belongs to the sea anemone sodium channel inhibitory toxin family. Type I subfamily.

It localises to the secreted. The protein localises to the nematocyst. In terms of biological role, inhibits voltage-gated sodium channels (Nav). In Antheopsis maculata (Sea anemone), this protein is Delta-actitoxin-Amc3a.